The primary structure comprises 348 residues: UDP-3-O-acylglucosamine N-acyltransferase (348 aa).

Catalysis depends on His248, which acts as the Proton acceptor.

The protein belongs to the transferase hexapeptide repeat family. LpxD subfamily. In terms of assembly, homotrimer.

It carries out the reaction a UDP-3-O-[(3R)-3-hydroxyacyl]-alpha-D-glucosamine + a (3R)-hydroxyacyl-[ACP] = a UDP-2-N,3-O-bis[(3R)-3-hydroxyacyl]-alpha-D-glucosamine + holo-[ACP] + H(+). The protein operates within bacterial outer membrane biogenesis; LPS lipid A biosynthesis. Catalyzes the N-acylation of UDP-3-O-acylglucosamine using 3-hydroxyacyl-ACP as the acyl donor. Is involved in the biosynthesis of lipid A, a phosphorylated glycolipid that anchors the lipopolysaccharide to the outer membrane of the cell. This is UDP-3-O-acylglucosamine N-acyltransferase from Rippkaea orientalis (strain PCC 8801 / RF-1) (Cyanothece sp. (strain PCC 8801)).